Here is a 644-residue protein sequence, read N- to C-terminus: Core protein VP4 (644 aa).

It belongs to the orbivirus VP4 family.

It is found in the virion. Functionally, the VP4 protein is one of the five proteins (with VP1, VP3, VP6 and VP7) which form the inner capsid of the virus. The protein is Core protein VP4 (Segment-4) of Bluetongue virus 11 (isolate USA) (BTV 11).